Here is a 246-residue protein sequence, read N- to C-terminus: Small ribosomal subunit protein uS3A (246 aa).

Residues 21–92 enclose the KH type-2 domain; it reads LNEFLTRELA…SVELYAEKVA (72 aa). Residues 215–246 form a disordered region; that stretch reads DEIVPTTPISEQKAAKPDQPQPPAMPQPVATA.

The protein belongs to the universal ribosomal protein uS3 family.

The protein resides in the cytoplasm. The protein localises to the nucleus. It localises to the nucleolus. It is found in the mitochondrion inner membrane. Its subcellular location is the cytoskeleton. The protein resides in the spindle. It carries out the reaction 2'-deoxyribonucleotide-(2'-deoxyribose 5'-phosphate)-2'-deoxyribonucleotide-DNA = a 3'-end 2'-deoxyribonucleotide-(2,3-dehydro-2,3-deoxyribose 5'-phosphate)-DNA + a 5'-end 5'-phospho-2'-deoxyribonucleoside-DNA + H(+). In terms of biological role, component of the small ribosomal subunit. The ribosome is a large ribonucleoprotein complex responsible for the synthesis of proteins in the cell. Has endonuclease activity and plays a role in repair of damaged DNA. Also involved in other processes including regulation of transcription, translation of its cognate mRNA, spindle formation and chromosome movement during mitosis, and apoptosis. The protein is Small ribosomal subunit protein uS3A (rps3-a) of Xenopus laevis (African clawed frog).